The primary structure comprises 430 residues: Glutamate-1-semialdehyde 2,1-aminomutase (430 aa).

The residue at position 265 (Lys265) is an N6-(pyridoxal phosphate)lysine.

The protein belongs to the class-III pyridoxal-phosphate-dependent aminotransferase family. HemL subfamily. As to quaternary structure, homodimer. The cofactor is pyridoxal 5'-phosphate.

Its subcellular location is the cytoplasm. The catalysed reaction is (S)-4-amino-5-oxopentanoate = 5-aminolevulinate. It participates in porphyrin-containing compound metabolism; protoporphyrin-IX biosynthesis; 5-aminolevulinate from L-glutamyl-tRNA(Glu): step 2/2. This Shewanella sp. (strain ANA-3) protein is Glutamate-1-semialdehyde 2,1-aminomutase.